A 492-amino-acid polypeptide reads, in one-letter code: Glutamyl-tRNA(Gln) amidotransferase subunit A (492 aa).

Active-site charge relay system residues include Lys-78 and Ser-158. Residue Ser-182 is the Acyl-ester intermediate of the active site.

This sequence belongs to the amidase family. GatA subfamily. As to quaternary structure, heterotrimer of A, B and C subunits.

It carries out the reaction L-glutamyl-tRNA(Gln) + L-glutamine + ATP + H2O = L-glutaminyl-tRNA(Gln) + L-glutamate + ADP + phosphate + H(+). Its function is as follows. Allows the formation of correctly charged Gln-tRNA(Gln) through the transamidation of misacylated Glu-tRNA(Gln) in organisms which lack glutaminyl-tRNA synthetase. The reaction takes place in the presence of glutamine and ATP through an activated gamma-phospho-Glu-tRNA(Gln). In Zymomonas mobilis subsp. mobilis (strain ATCC 31821 / ZM4 / CP4), this protein is Glutamyl-tRNA(Gln) amidotransferase subunit A.